The primary structure comprises 80 residues: MALTCRLRFPVPGFRGRMHRRRGMAGHGLTGGMRRAHHRRRRASHRRMRGGILPLLIPLIAAAIGAVPGIASVALQAQRH.

The propeptide occupies Ala-2–Gly-32. The segment at Met-18–His-45 is disordered. The span at Arg-34 to His-45 shows a compositional bias: basic residues. Positions Ile-52–His-80 are excised as a propeptide.

It belongs to the adenoviridae core protein X family. As to quaternary structure, interacts with the core-capsid bridging protein; this interaction bridges the virus core to the capsid. In terms of processing, cleaved by the viral protease during virion maturation to form the mature protein.

The protein localises to the host nucleus. The protein resides in the host nucleolus. It is found in the virion. Interacts with the viral DNA and aids in tightly condensing it within the capsid. Cleavage of pre-core protein X may serve to partially relax this structure within the mature virion prior to its entry into the nucleus. This chain is Pre-core protein X, found in Human adenovirus C serotype 2 (HAdV-2).